A 49-amino-acid polypeptide reads, in one-letter code: U-theraphotoxin-Lk2a (49 aa).

4 disulfides stabilise this stretch: cysteine 4–cysteine 17, cysteine 8–cysteine 41, cysteine 22–cysteine 24, and cysteine 35–cysteine 46.

This sequence belongs to the neurotoxin 12 (Hwtx-2) family. 04 (lasiotoxin) subfamily. As to expression, expressed by the venom gland.

It localises to the secreted. Toxin that causes irreversible contractile paralysis into adult Aedes aegypti resulting in 100% mortality after 24 hours. The protein is U-theraphotoxin-Lk2a of Lasiodora klugi (Bahia scarlet tarantula).